The sequence spans 252 residues: LexA repressor (252 aa).

Residues 1–46 (MPEENRGGHQPYTEESSVSALHPVRTDDSVGSSAEQTGDAPTLTER) are disordered. The H-T-H motif DNA-binding region spans 67-87 (IREIGEAVGLSSPSSVAHQLK). Catalysis depends on for autocatalytic cleavage activity residues S176 and K213.

It belongs to the peptidase S24 family. Homodimer.

The enzyme catalyses Hydrolysis of Ala-|-Gly bond in repressor LexA.. Functionally, represses a number of genes involved in the response to DNA damage (SOS response), including recA and lexA. In the presence of single-stranded DNA, RecA interacts with LexA causing an autocatalytic cleavage which disrupts the DNA-binding part of LexA, leading to derepression of the SOS regulon and eventually DNA repair. This Thermobifida fusca (strain YX) protein is LexA repressor.